The following is a 491-amino-acid chain: 1-aminocyclopropane-1-carboxylate synthase (491 aa).

Residue lysine 278 is modified to N6-(pyridoxal phosphate)lysine.

Belongs to the class-I pyridoxal-phosphate-dependent aminotransferase family. As to quaternary structure, homodimer. Requires pyridoxal 5'-phosphate as cofactor.

It carries out the reaction S-adenosyl-L-methionine = 1-aminocyclopropane-1-carboxylate + S-methyl-5'-thioadenosine + H(+). It functions in the pathway alkene biosynthesis; ethylene biosynthesis via S-adenosyl-L-methionine; ethylene from S-adenosyl-L-methionine: step 1/2. Its function is as follows. Catalyzes the formation of 1-aminocyclopropane-1-carboxylate, a direct precursor of ethylene in higher plants. In Nicotiana tabacum (Common tobacco), this protein is 1-aminocyclopropane-1-carboxylate synthase (ACS1).